The sequence spans 558 residues: Adenine deaminase (558 aa).

This sequence belongs to the metallo-dependent hydrolases superfamily. Adenine deaminase family. Mn(2+) serves as cofactor.

It carries out the reaction adenine + H2O + H(+) = hypoxanthine + NH4(+). The protein is Adenine deaminase of Methanoregula boonei (strain DSM 21154 / JCM 14090 / 6A8).